We begin with the raw amino-acid sequence, 186 residues long: uncharacterized protein (186 aa).

CBS domains lie at 10–69 (IMKK…KLPP) and 77–133 (ISSG…IIST).

This is an uncharacterized protein from Methanocaldococcus jannaschii (strain ATCC 43067 / DSM 2661 / JAL-1 / JCM 10045 / NBRC 100440) (Methanococcus jannaschii).